A 452-amino-acid chain; its full sequence is UPF0210 protein Cthe_0410 (452 aa).

Belongs to the UPF0210 family. As to quaternary structure, homodimer.

The protein is UPF0210 protein Cthe_0410 of Acetivibrio thermocellus (strain ATCC 27405 / DSM 1237 / JCM 9322 / NBRC 103400 / NCIMB 10682 / NRRL B-4536 / VPI 7372) (Clostridium thermocellum).